The chain runs to 550 residues: Arginine--tRNA ligase (550 aa).

Positions 123–133 (ANPTGYLHIAH) match the 'HIGH' region motif.

It belongs to the class-I aminoacyl-tRNA synthetase family. As to quaternary structure, monomer.

It is found in the cytoplasm. The catalysed reaction is tRNA(Arg) + L-arginine + ATP = L-arginyl-tRNA(Arg) + AMP + diphosphate. The polypeptide is Arginine--tRNA ligase (Ureaplasma parvum serovar 3 (strain ATCC 27815 / 27 / NCTC 11736)).